Consider the following 67-residue polypeptide: Beta-defensin 1 (67 aa).

An N-terminal signal peptide occupies residues 1–22 (MRIHYLLFAVLFLFLMPVPGEG). Cystine bridges form between cysteine 33-cysteine 62, cysteine 40-cysteine 55, and cysteine 45-cysteine 63.

In terms of assembly, monomer. Homodimer. In terms of tissue distribution, highly expressed in tongue, nasopharyngeal mucosa and skin, and to a lower extent in the Eustachian tube, lung and trachea.

The protein resides in the secreted. Its subcellular location is the membrane. Has antibacterial activity against Gram-positive bacterium S.pneumoniae Serotype 14. Is also active against Gram-negative bacteria M.catarrhalis 1857, and non-typeable H.influenzae strains 86-028NP and 1128. Has antifungal activity against C.albicans. May have a role in maintaining sterility in the middle ear. May act as a ligand for C-C chemokine receptor CCR6. Positively regulates the sperm motility and bactericidal activity in a CCR6-dependent manner. Binds to CCR6 and triggers Ca2+ mobilization in the sperm which is important for its motility. The protein is Beta-defensin 1 (DEFB1) of Chinchilla lanigera (Long-tailed chinchilla).